Here is a 234-residue protein sequence, read N- to C-terminus: Aspartate/glutamate leucyltransferase (234 aa).

It belongs to the R-transferase family. Bpt subfamily.

The protein localises to the cytoplasm. It carries out the reaction N-terminal L-glutamyl-[protein] + L-leucyl-tRNA(Leu) = N-terminal L-leucyl-L-glutamyl-[protein] + tRNA(Leu) + H(+). The catalysed reaction is N-terminal L-aspartyl-[protein] + L-leucyl-tRNA(Leu) = N-terminal L-leucyl-L-aspartyl-[protein] + tRNA(Leu) + H(+). In terms of biological role, functions in the N-end rule pathway of protein degradation where it conjugates Leu from its aminoacyl-tRNA to the N-termini of proteins containing an N-terminal aspartate or glutamate. The chain is Aspartate/glutamate leucyltransferase from Hahella chejuensis (strain KCTC 2396).